The chain runs to 113 residues: Prefoldin subunit beta (113 aa).

The protein belongs to the prefoldin subunit beta family. As to quaternary structure, heterohexamer of two alpha and four beta subunits.

It localises to the cytoplasm. Functionally, molecular chaperone capable of stabilizing a range of proteins. Seems to fulfill an ATP-independent, HSP70-like function in archaeal de novo protein folding. This chain is Prefoldin subunit beta, found in Methanococcus vannielii (strain ATCC 35089 / DSM 1224 / JCM 13029 / OCM 148 / SB).